We begin with the raw amino-acid sequence, 365 residues long: Probable dual-specificity RNA methyltransferase RlmN (365 aa).

Residue glutamate 106 is the Proton acceptor of the active site. One can recognise a Radical SAM core domain in the interval 112 to 352; the sequence is YPDRVTLCVS…VTVRDTRGRE (241 aa). Residues cysteine 119 and cysteine 357 are joined by a disulfide bond. Positions 126, 130, and 133 each coordinate [4Fe-4S] cluster. S-adenosyl-L-methionine-binding positions include 181-182, serine 215, 238-240, and asparagine 314; these read GE and SLH. Cysteine 357 (S-methylcysteine intermediate) is an active-site residue.

The protein belongs to the radical SAM superfamily. RlmN family. It depends on [4Fe-4S] cluster as a cofactor.

The protein localises to the cytoplasm. The catalysed reaction is adenosine(2503) in 23S rRNA + 2 reduced [2Fe-2S]-[ferredoxin] + 2 S-adenosyl-L-methionine = 2-methyladenosine(2503) in 23S rRNA + 5'-deoxyadenosine + L-methionine + 2 oxidized [2Fe-2S]-[ferredoxin] + S-adenosyl-L-homocysteine. It catalyses the reaction adenosine(37) in tRNA + 2 reduced [2Fe-2S]-[ferredoxin] + 2 S-adenosyl-L-methionine = 2-methyladenosine(37) in tRNA + 5'-deoxyadenosine + L-methionine + 2 oxidized [2Fe-2S]-[ferredoxin] + S-adenosyl-L-homocysteine. Its function is as follows. Specifically methylates position 2 of adenine 2503 in 23S rRNA and position 2 of adenine 37 in tRNAs. This is Probable dual-specificity RNA methyltransferase RlmN from Thermobifida fusca (strain YX).